A 742-amino-acid polypeptide reads, in one-letter code: Phosphoribosylformylglycinamidine synthase subunit PurL (742 aa).

Residue histidine 54 is part of the active site. Tyrosine 57 and lysine 96 together coordinate ATP. Mg(2+) is bound at residue glutamate 98. Residues 99–102 (SHNH) and arginine 121 each bind substrate. The active-site Proton acceptor is the histidine 100. Aspartate 122 serves as a coordination point for Mg(2+). Substrate is bound at residue glutamine 245. Aspartate 273 serves as a coordination point for Mg(2+). 317-319 (ESQ) provides a ligand contact to substrate. Residues aspartate 500 and glycine 537 each coordinate ATP. Asparagine 538 contributes to the Mg(2+) binding site. Serine 540 contributes to the substrate binding site.

The protein belongs to the FGAMS family. As to quaternary structure, monomer. Part of the FGAM synthase complex composed of 1 PurL, 1 PurQ and 2 PurS subunits.

It is found in the cytoplasm. It carries out the reaction N(2)-formyl-N(1)-(5-phospho-beta-D-ribosyl)glycinamide + L-glutamine + ATP + H2O = 2-formamido-N(1)-(5-O-phospho-beta-D-ribosyl)acetamidine + L-glutamate + ADP + phosphate + H(+). Its pathway is purine metabolism; IMP biosynthesis via de novo pathway; 5-amino-1-(5-phospho-D-ribosyl)imidazole from N(2)-formyl-N(1)-(5-phospho-D-ribosyl)glycinamide: step 1/2. In terms of biological role, part of the phosphoribosylformylglycinamidine synthase complex involved in the purines biosynthetic pathway. Catalyzes the ATP-dependent conversion of formylglycinamide ribonucleotide (FGAR) and glutamine to yield formylglycinamidine ribonucleotide (FGAM) and glutamate. The FGAM synthase complex is composed of three subunits. PurQ produces an ammonia molecule by converting glutamine to glutamate. PurL transfers the ammonia molecule to FGAR to form FGAM in an ATP-dependent manner. PurS interacts with PurQ and PurL and is thought to assist in the transfer of the ammonia molecule from PurQ to PurL. The sequence is that of Phosphoribosylformylglycinamidine synthase subunit PurL from Oceanobacillus iheyensis (strain DSM 14371 / CIP 107618 / JCM 11309 / KCTC 3954 / HTE831).